The sequence spans 448 residues: SET domain-containing protein SmydA-8, isoform B (448 aa).

The region spanning 42-273 is the SET domain; it reads PSWRVADSPI…AGAEITMSYA (232 aa).

The protein belongs to the class V-like SAM-binding methyltransferase superfamily.

The polypeptide is SET domain-containing protein SmydA-8, isoform B (Drosophila melanogaster (Fruit fly)).